Here is a 423-residue protein sequence, read N- to C-terminus: Ribosome biogenesis protein WDR12 homolog (423 aa).

The ubiquitin-like (UBL) domain stretch occupies residues 10–93 (VQVHLKTKQE…EDAIEIEYVE (84 aa)). WD repeat units lie at residues 105–142 (LHDD…ILTI), 144–186 (GHTA…NAVE), 193–232 (GHER…AGGD), 253–291 (GHRE…IKTE), 293–332 (STNK…GSIV), 338–378 (GHNA…APLY), and 382–420 (GHGE…VETM).

It belongs to the WD repeat WDR12/YTM1 family.

Its subcellular location is the nucleus. It localises to the nucleolus. The protein localises to the nucleoplasm. Required for maturation of ribosomal RNAs and formation of the large ribosomal subunit. This Drosophila willistoni (Fruit fly) protein is Ribosome biogenesis protein WDR12 homolog.